The primary structure comprises 310 residues: Malate dehydrogenase (310 aa).

Residues 7 to 13 (GAAGGIG) and aspartate 34 contribute to the NAD(+) site. Substrate-binding residues include arginine 81 and arginine 87. NAD(+) contacts are provided by residues asparagine 94 and 117–119 (ITN). Substrate-binding residues include asparagine 119 and arginine 153. Histidine 177 serves as the catalytic Proton acceptor. Methionine 227 is an NAD(+) binding site.

It belongs to the LDH/MDH superfamily. MDH type 1 family. As to quaternary structure, homodimer.

It carries out the reaction (S)-malate + NAD(+) = oxaloacetate + NADH + H(+). In terms of biological role, catalyzes the reversible oxidation of malate to oxaloacetate. This is Malate dehydrogenase from Vibrio vulnificus (strain YJ016).